Consider the following 391-residue polypeptide: GATA-binding factor 6-B (391 aa).

The segment covering 57 to 69 has biased composition (polar residues); sequence GTHSVNSHWSQAT. Residues 57–107 are disordered; the sequence is GTHSVNSHWSQATSESSSYSSSSPHPSSRYHYSPSPPMANGSTRDTGYSSS. A compositionally biased stretch (low complexity) spans 70–89; that stretch reads SESSSYSSSSPHPSSRYHYS. Residues 96–107 are compositionally biased toward polar residues; the sequence is NGSTRDTGYSSS. GATA-type zinc fingers lie at residues 182–206 and 236–260; these read CVNCGSVQTPLWRRDGTGHYLCNAC and CANCHTTTTTLWRRNTEGEPVCNAC. Positions 277–334 are disordered; it reads KEGIQTRKRKPKNLNKSKSSSSNGNSSHHITMTPTSTTSSTNSDDCIKNGSPSQNTAP. The segment covering 282-291 has biased composition (basic residues); it reads TRKRKPKNLN. Residues 292–319 are compositionally biased toward low complexity; that stretch reads KSKSSSSNGNSSHHITMTPTSTTSSTNS.

In embryos, expressed in the presumptive heart mesoderm. In adults, widely distributed but predominant in the heart.

The protein localises to the nucleus. Functionally, transcriptional activator that binds 5'-GATA-3'-containing motifs within gene promoters. Regulates cardiac-specific transcription during embryogenesis and thereby cardiogenesis. This Xenopus laevis (African clawed frog) protein is GATA-binding factor 6-B (gata6-b).